We begin with the raw amino-acid sequence, 124 residues long: Small ribosomal subunit protein uS13 (124 aa).

The tract at residues 95–124 is disordered; it reads GLPVRGQRTKTNARTRKGPKRTIAGKKKAK.

It belongs to the universal ribosomal protein uS13 family. As to quaternary structure, part of the 30S ribosomal subunit. Forms a loose heterodimer with protein S19. Forms two bridges to the 50S subunit in the 70S ribosome.

Located at the top of the head of the 30S subunit, it contacts several helices of the 16S rRNA. In the 70S ribosome it contacts the 23S rRNA (bridge B1a) and protein L5 of the 50S subunit (bridge B1b), connecting the 2 subunits; these bridges are implicated in subunit movement. Contacts the tRNAs in the A and P-sites. The polypeptide is Small ribosomal subunit protein uS13 (Rhodococcus jostii (strain RHA1)).